A 1006-amino-acid chain; its full sequence is Kinesin-like protein KIN-5C (1006 aa).

The region spanning 9–355 (NVQVLLRCRP…LDYAHRAKNI (347 aa)) is the Kinesin motor domain. ATP is bound at residue 95–102 (GQTGTGKT). Residues 371–522 (IKDLYGEIER…NASLFQKIAR (152 aa)) are a coiled coil.

It belongs to the TRAFAC class myosin-kinesin ATPase superfamily. Kinesin family. KIN-5/BimC subfamily.

The protein resides in the cytoplasm. The protein localises to the cytoskeleton. Its subcellular location is the spindle. Its function is as follows. Responsible for microtubule translocation. May be important for the organization of phragmoplast-specific arrays of microtubules. Plays an essential role in stabilizing the mitotic spindle. Required during mitotic cytokinesis. The protein is Kinesin-like protein KIN-5C of Nicotiana tabacum (Common tobacco).